The primary structure comprises 479 residues: 3-isopropylmalate dehydratase large subunit (479 aa).

Residues C353, C414, and C417 each coordinate [4Fe-4S] cluster.

It belongs to the aconitase/IPM isomerase family. LeuC type 1 subfamily. In terms of assembly, heterodimer of LeuC and LeuD. [4Fe-4S] cluster serves as cofactor.

The catalysed reaction is (2R,3S)-3-isopropylmalate = (2S)-2-isopropylmalate. The protein operates within amino-acid biosynthesis; L-leucine biosynthesis; L-leucine from 3-methyl-2-oxobutanoate: step 2/4. Catalyzes the isomerization between 2-isopropylmalate and 3-isopropylmalate, via the formation of 2-isopropylmaleate. This Xanthomonas campestris pv. campestris (strain 8004) protein is 3-isopropylmalate dehydratase large subunit.